The sequence spans 257 residues: Probable S-adenosylmethionine-dependent methyltransferase MSMEG_2350/MSMEI_2290 (257 aa).

It belongs to the methyltransferase superfamily.

In terms of biological role, probable S-adenosylmethionine-dependent methyltransferase required for the 6-O-methylation of the polysaccharide backbone of 6-O-methylglucosyl lipopolysaccharides (MGLP). The sequence is that of Probable S-adenosylmethionine-dependent methyltransferase MSMEG_2350/MSMEI_2290 from Mycolicibacterium smegmatis (strain ATCC 700084 / mc(2)155) (Mycobacterium smegmatis).